The following is a 294-amino-acid chain: Ribosomal RNA small subunit methyltransferase H (294 aa).

S-adenosyl-L-methionine contacts are provided by residues 40-42, Asp-59, Phe-86, Asp-102, and Gln-109; that span reads GGH.

This sequence belongs to the methyltransferase superfamily. RsmH family.

The protein resides in the cytoplasm. The catalysed reaction is cytidine(1402) in 16S rRNA + S-adenosyl-L-methionine = N(4)-methylcytidine(1402) in 16S rRNA + S-adenosyl-L-homocysteine + H(+). Specifically methylates the N4 position of cytidine in position 1402 (C1402) of 16S rRNA. The sequence is that of Ribosomal RNA small subunit methyltransferase H from Cyanothece sp. (strain PCC 7425 / ATCC 29141).